The following is an 87-amino-acid chain: Anaphase-promoting complex subunit 11 (87 aa).

The segment at 35-77 adopts an RING-type; atypical zinc-finger fold; that stretch reads CVDCKIPGDDCPPVWGVCNHAFHMHCILKWLNANELQQCPMCR.

It belongs to the RING-box family. The APC/C is composed of at least 13 subunits that stay tightly associated throughout the cell cycle: anapc1, anapc2, anapc3, anapc4, anapc5, anapc6, anapc7, anapc8, anapc10, anapc11, cdc20, cdc26 and cdh1.

The protein resides in the nucleus. The protein operates within protein modification; protein ubiquitination. In terms of biological role, component of the anaphase promoting complex/cyclosome (APC/C), a cell cycle-regulated E3 ubiquitin-protein ligase complex that controls progression through mitosis and the G1 phase of the cell cycle. The sequence is that of Anaphase-promoting complex subunit 11 (anapc11) from Dictyostelium discoideum (Social amoeba).